The following is an 858-amino-acid chain: DNA mismatch repair protein MutS (858 aa).

600-607 (GPNMSGKS) contacts ATP. Positions 803–823 (EAASDEVDDNNSENSPMTDAE) are disordered.

The protein belongs to the DNA mismatch repair MutS family.

Functionally, this protein is involved in the repair of mismatches in DNA. It is possible that it carries out the mismatch recognition step. This protein has a weak ATPase activity. The polypeptide is DNA mismatch repair protein MutS (Lactobacillus helveticus (strain DPC 4571)).